The chain runs to 452 residues: RNA polymerase II-associated protein rba50 (452 aa).

Disordered stretches follow at residues 60–83 (LRKN…IDEE), 125–202 (EREL…QTKR), and 223–261 (PIKG…PLEF). The segment covering 125-135 (ERELAQRKDRS) has biased composition (basic and acidic residues). Residues 136–154 (SQVNTPDLSQRPSDDSFLS) show a composition bias toward polar residues. Residues 156–165 (EKLRSSEKLN) are compositionally biased toward basic and acidic residues. Over residues 170 to 191 (SVLSSEAVDSSSGSPSPPMALS) the composition is skewed to low complexity.

It belongs to the RPAP1 family. Interacts with RNA polymerase II.

It is found in the cytoplasm. It localises to the nucleus. Forms an interface between the RNA polymerase II enzyme and chaperone/scaffolding proteins, suggesting that it is required to connect RNA polymerase II to regulators of protein complex formation. In Schizosaccharomyces pombe (strain 972 / ATCC 24843) (Fission yeast), this protein is RNA polymerase II-associated protein rba50 (rba50).